Consider the following 438-residue polypeptide: Serine hydroxymethyltransferase (438 aa).

(6S)-5,6,7,8-tetrahydrofolate contacts are provided by residues leucine 119 and 123-125; that span reads GHL. At lysine 228 the chain carries N6-(pyridoxal phosphate)lysine. Residue 370-372 coordinates (6S)-5,6,7,8-tetrahydrofolate; that stretch reads SPF.

This sequence belongs to the SHMT family. Homodimer. The cofactor is pyridoxal 5'-phosphate.

The protein resides in the cytoplasm. The catalysed reaction is (6R)-5,10-methylene-5,6,7,8-tetrahydrofolate + glycine + H2O = (6S)-5,6,7,8-tetrahydrofolate + L-serine. It functions in the pathway one-carbon metabolism; tetrahydrofolate interconversion. Its pathway is amino-acid biosynthesis; glycine biosynthesis; glycine from L-serine: step 1/1. Its function is as follows. Catalyzes the reversible interconversion of serine and glycine with tetrahydrofolate (THF) serving as the one-carbon carrier. This reaction serves as the major source of one-carbon groups required for the biosynthesis of purines, thymidylate, methionine, and other important biomolecules. Also exhibits THF-independent aldolase activity toward beta-hydroxyamino acids, producing glycine and aldehydes, via a retro-aldol mechanism. The polypeptide is Serine hydroxymethyltransferase (Chlorobium chlorochromatii (strain CaD3)).